A 299-amino-acid polypeptide reads, in one-letter code: MEQHLDAYCMHLRSERQVSPHTLEAYRRDLSKVLAYCQKAQRSSWNDLDIQHLRSFTARQHQQGQSSRSLARMLSAVRGFYKYLNREGICQHDPANGLSPPKGERRLPKTLDTDRTAQLLDGGVEDDFLAHRDQAILELLYSSGLRLSELTGLNLDQLDLRDGLVQVLGKGSKTRVLPVGSKARQALEIWLPLRALTNPQDDAVFVSQQGKRLGPRTIQVRLKAAGERELGQNLHPHMLRHSFASHLLESSQDLRAVQELLGHADIKTTQIYTHLDFQHLATVYDSAHPRAKRKGAADD.

In terms of domain architecture, Core-binding (CB) spans methionine 1–asparagine 85. A Tyr recombinase domain is found at arginine 106–aspartate 285. Residues arginine 146, lysine 170, histidine 237, arginine 240, and histidine 263 contribute to the active site. Residue tyrosine 272 is the O-(3'-phospho-DNA)-tyrosine intermediate of the active site.

It belongs to the 'phage' integrase family. XerC subfamily. As to quaternary structure, forms a cyclic heterotetrameric complex composed of two molecules of XerC and two molecules of XerD.

The protein localises to the cytoplasm. In terms of biological role, site-specific tyrosine recombinase, which acts by catalyzing the cutting and rejoining of the recombining DNA molecules. The XerC-XerD complex is essential to convert dimers of the bacterial chromosome into monomers to permit their segregation at cell division. It also contributes to the segregational stability of plasmids. The protein is Tyrosine recombinase XerC of Pseudomonas savastanoi pv. phaseolicola (strain 1448A / Race 6) (Pseudomonas syringae pv. phaseolicola (strain 1448A / Race 6)).